Consider the following 139-residue polypeptide: Cell division protein SepF (139 aa).

It belongs to the SepF family. In terms of assembly, homodimer. Interacts with FtsZ.

The protein localises to the cytoplasm. Its function is as follows. Cell division protein that is part of the divisome complex and is recruited early to the Z-ring. Probably stimulates Z-ring formation, perhaps through the cross-linking of FtsZ protofilaments. Its function overlaps with FtsA. The protein is Cell division protein SepF of Coprothermobacter proteolyticus (strain ATCC 35245 / DSM 5265 / OCM 4 / BT).